Here is a 413-residue protein sequence, read N- to C-terminus: Peptidase T (413 aa).

Histidine 82 contributes to the Zn(2+) binding site. Aspartate 84 is an active-site residue. Residue aspartate 145 coordinates Zn(2+). Glutamate 179 acts as the Proton acceptor in catalysis. Zn(2+) contacts are provided by glutamate 180, aspartate 202, and histidine 384.

The protein belongs to the peptidase M20B family. Requires Zn(2+) as cofactor.

Its subcellular location is the cytoplasm. The catalysed reaction is Release of the N-terminal residue from a tripeptide.. Cleaves the N-terminal amino acid of tripeptides. The protein is Peptidase T of Latilactobacillus sakei subsp. sakei (strain 23K) (Lactobacillus sakei subsp. sakei).